Here is a 203-residue protein sequence, read N- to C-terminus: Ras-related protein Rab-30 (203 aa).

6 residues coordinate GTP: valine 20, glycine 21, lysine 22, threonine 23, cysteine 24, and threonine 41. Residue threonine 23 participates in Mg(2+) binding. The segment at 36 to 44 (PGQGATIGV) is switch-I. Threonine 41 and aspartate 64 together coordinate Mg(2+). Residues glycine 67, asparagine 122, lysine 123, aspartate 125, alanine 153, and lysine 154 each contribute to the GTP site. Residues 67–83 (GQERFRSITQSYYRSAN) are switch-II. S-geranylgeranyl cysteine attachment occurs at residues cysteine 199 and cysteine 200. Cysteine 200 carries the cysteine methyl ester modification. Positions 201–203 (NFN) are cleaved as a propeptide — removed in mature form.

The protein belongs to the small GTPase superfamily. Rab family. Mg(2+) is required as a cofactor.

It is found in the membrane. The protein resides in the golgi apparatus. The protein localises to the trans-Golgi network membrane. It localises to the cis-Golgi network membrane. Its subcellular location is the golgi apparatus membrane. It is found in the cytoplasm. The protein resides in the cytoplasmic vesicle. The protein localises to the autophagosome membrane. It localises to the autolysosome membrane. It catalyses the reaction GTP + H2O = GDP + phosphate + H(+). Its activity is regulated as follows. Regulated by guanine nucleotide exchange factors (GEFs) which promote the exchange of bound GDP for free GTP. Regulated by GTPase activating proteins (GAPs) which increase the GTP hydrolysis activity. Inhibited by GDP dissociation inhibitors (GDIs). Functionally, the small GTPases Rab are key regulators of intracellular membrane trafficking, from the formation of transport vesicles to their fusion with membranes. Rabs cycle between an inactive GDP-bound form and an active GTP-bound form that is able to recruit to membranes different sets of downstream effectors directly responsible for vesicle formation, movement, tethering and fusion. RAB30 is required for maintaining the structural integrity of the Golgi apparatus, possibly by mediating interactions with cytoplasmic scaffolding proteins. Facilitates lipid homeostasis during fasting by regulating hepatic protein and lipid trafficking in a PPAR-alpha-dependent manner. Promotes autophagosome biogenesis during bacterial infection such as group A Streptococcus infection. In Bos taurus (Bovine), this protein is Ras-related protein Rab-30 (RAB30).